The chain runs to 206 residues: Urease accessory protein UreG (206 aa).

Position 14–21 (14–21 (GPVGSGKT)) interacts with GTP.

Belongs to the SIMIBI class G3E GTPase family. UreG subfamily. Homodimer. UreD, UreF and UreG form a complex that acts as a GTP-hydrolysis-dependent molecular chaperone, activating the urease apoprotein by helping to assemble the nickel containing metallocenter of UreC. The UreE protein probably delivers the nickel.

It localises to the cytoplasm. Facilitates the functional incorporation of the urease nickel metallocenter. This process requires GTP hydrolysis, probably effectuated by UreG. The chain is Urease accessory protein UreG from Methylocella silvestris (strain DSM 15510 / CIP 108128 / LMG 27833 / NCIMB 13906 / BL2).